Here is a 643-residue protein sequence, read N- to C-terminus: 1-deoxy-D-xylulose-5-phosphate synthase (643 aa).

Thiamine diphosphate-binding positions include histidine 79 and 120 to 122 (AHA). Aspartate 151 serves as a coordination point for Mg(2+). Thiamine diphosphate is bound by residues 152 to 153 (GS), asparagine 180, tyrosine 287, and glutamate 369. Residue asparagine 180 participates in Mg(2+) binding.

The protein belongs to the transketolase family. DXPS subfamily. Homodimer. Mg(2+) is required as a cofactor. The cofactor is thiamine diphosphate.

It catalyses the reaction D-glyceraldehyde 3-phosphate + pyruvate + H(+) = 1-deoxy-D-xylulose 5-phosphate + CO2. It participates in metabolic intermediate biosynthesis; 1-deoxy-D-xylulose 5-phosphate biosynthesis; 1-deoxy-D-xylulose 5-phosphate from D-glyceraldehyde 3-phosphate and pyruvate: step 1/1. In terms of biological role, catalyzes the acyloin condensation reaction between C atoms 2 and 3 of pyruvate and glyceraldehyde 3-phosphate to yield 1-deoxy-D-xylulose-5-phosphate (DXP). The sequence is that of 1-deoxy-D-xylulose-5-phosphate synthase from Maricaulis maris (strain MCS10) (Caulobacter maris).